The following is a 525-amino-acid chain: MSEIWEDAIKSNAWPFVEAKKILDSLNGKVPEKNYVLFETGYGPSGLPHIGTFGENARMVMVQKAFEQLSDISTKLICFSDDMDGLRKVPSNIPNPEMVAGYMDMPLTSIPDPFGECESYGHYMNAKLRSFLDKFGFEYEFYSSTNCYKAGMFDEMLIRVLEKYDEIMELMLPTFREERKATYSPFMPICPKTGKVLQVPIEKWDAKAGTVRYKDEAGNYVEVPVTGGHCKLQWKPDFGMRWAALKVDYEMYGKDHLANARLYSEICRILGGKPPVQLCYELFLDENGEKISKSKGNSISVDDWLKYAPVESMALFMYQNPTRAKRLFFDVIPKNVDEYITFNQKYHLEEDRAKRFANPVYHIHHGNVPKIETFGITYALLLNLTSVCNPSDKSVLWGFISKYEPKATPKTSPYLDHLAEFAIRYYNDFIKAYKSYLAPSEKHKVILQDILDMLSSISDQTEAEAIQKAIYDIGMKAGYENLRDYFKDLYQILLGQSEGPRLGTFIKLYGIKETMKLVEGKLYTR.

Positions Pro44–Thr52 match the 'HIGH' region motif. Positions Lys290–Ser294 match the 'KMSKS' region motif. ATP is bound at residue Lys293.

Belongs to the class-I aminoacyl-tRNA synthetase family.

The protein resides in the cytoplasm. The catalysed reaction is tRNA(Lys) + L-lysine + ATP = L-lysyl-tRNA(Lys) + AMP + diphosphate. This chain is Lysine--tRNA ligase, found in Rickettsia felis (strain ATCC VR-1525 / URRWXCal2) (Rickettsia azadi).